We begin with the raw amino-acid sequence, 378 residues long: Probable dihydroorotase-like protein (378 aa).

Belongs to the metallo-dependent hydrolases superfamily. DHOase family. PyrC' subfamily.

Its function is as follows. Non-functional DHOase. This is Probable dihydroorotase-like protein (pyrC') from Helicobacter pylori (strain ATCC 700392 / 26695) (Campylobacter pylori).